Consider the following 505-residue polypeptide: Lysine--tRNA ligase (505 aa).

The Mg(2+) site is built by E415 and E422.

Belongs to the class-II aminoacyl-tRNA synthetase family. In terms of assembly, homodimer. Mg(2+) serves as cofactor.

Its subcellular location is the cytoplasm. The enzyme catalyses tRNA(Lys) + L-lysine + ATP = L-lysyl-tRNA(Lys) + AMP + diphosphate. This chain is Lysine--tRNA ligase, found in Enterobacter sp. (strain 638).